The sequence spans 159 residues: Major latex protein 149 (159 aa).

The protein belongs to the MLP family. As to expression, laticifer.

Its subcellular location is the vacuole. The protein resides in the cytoplasmic vesicle. Functionally, not known; MLPs constitute up to 50% of the soluble latex protein. The sequence is that of Major latex protein 149 (MLP149) from Papaver somniferum (Opium poppy).